A 745-amino-acid polypeptide reads, in one-letter code: Protein PHOX1 (745 aa).

The span at 1-10 shows a compositional bias: basic residues; sequence MGKPTGKKKN. The tract at residues 1-37 is disordered; that stretch reads MGKPTGKKKNNNYTEMPPTESSTTGGGKTGKSFDRSA. TPR repeat units lie at residues 52-85, 90-125, and 126-159; these read ALEL…LPRD, AYLR…SPRF, and SKAL…EPEN. A PB1 domain is found at 280-359; the sequence is TRTVKLVHGD…GSFRLYIAEV (80 aa). TPR repeat units follow at residues 406-441, 443-472, 494-528, and 553-586; these read EHWI…YTEA, EDIV…AMFN, ETIL…KSDF, and GEVD…WEEM.

Interacts with myosin XI-1 and XI-K.

Its subcellular location is the cytoplasmic vesicle membrane. In terms of biological role, carboxylate clamp type tetratricopeptide repeat protein that may act as a potential Hsp90/Hsp70 co-chaperone. Contributes to polar growth of root hairs. The protein is Protein PHOX1 of Arabidopsis thaliana (Mouse-ear cress).